Reading from the N-terminus, the 775-residue chain is Subtilisin-like protease SBT4.1 (775 aa).

A signal peptide spans 1–23 (MAIAFHTFLLQLLLFFFASFAEA). A glycan (N-linked (GlcNAc...) asparagine) is linked at asparagine 24. Residues 24-106 (NDSRKTYLVQ…VSRSRNLKLQ (83 aa)) constitute a propeptide, activation peptide. Residues 29–105 (TYLVQMKVGG…EVSRSRNLKL (77 aa)) enclose the Inhibitor I9 domain. One can recognise a Peptidase S8 domain in the interval 110–606 (SWDFMNLTLK…SGHLNATKVR (497 aa)). 2 N-linked (GlcNAc...) asparagine glycosylation sites follow: asparagine 115 and asparagine 126. Aspartate 136 serves as the catalytic Charge relay system. Residue asparagine 162 is glycosylated (N-linked (GlcNAc...) asparagine). The active-site Charge relay system is the histidine 196. Residues 365-459 (FYPLLNEKAP…FLDEQKKGKL (95 aa)) enclose the PA domain. N-linked (GlcNAc...) asparagine glycosylation occurs at asparagine 437. The active-site Charge relay system is the serine 551. N-linked (GlcNAc...) asparagine glycosylation occurs at asparagine 601.

Belongs to the peptidase S8 family. In terms of processing, the C-terminal propeptide is autocleaved.

It localises to the secreted. The chain is Subtilisin-like protease SBT4.1 from Arabidopsis thaliana (Mouse-ear cress).